The following is a 172-amino-acid chain: Shikimate kinase (172 aa).

14–19 (GAGKST) provides a ligand contact to ATP. Serine 18 lines the Mg(2+) pocket. Residues aspartate 36, arginine 60, and glycine 82 each contribute to the substrate site. Position 120 (arginine 120) interacts with ATP. Residue arginine 140 coordinates substrate. An ATP-binding site is contributed by glutamine 157.

Belongs to the shikimate kinase family. In terms of assembly, monomer. The cofactor is Mg(2+).

The protein resides in the cytoplasm. The catalysed reaction is shikimate + ATP = 3-phosphoshikimate + ADP + H(+). The protein operates within metabolic intermediate biosynthesis; chorismate biosynthesis; chorismate from D-erythrose 4-phosphate and phosphoenolpyruvate: step 5/7. Functionally, catalyzes the specific phosphorylation of the 3-hydroxyl group of shikimic acid using ATP as a cosubstrate. The polypeptide is Shikimate kinase (Aeromonas salmonicida (strain A449)).